We begin with the raw amino-acid sequence, 406 residues long: Argininosuccinate synthase (406 aa).

8–16 (AYSGGLDTS) serves as a coordination point for ATP. Tyr86 is an L-citrulline binding site. Residue Gly116 participates in ATP binding. Positions 118, 122, and 123 each coordinate L-aspartate. An L-citrulline-binding site is contributed by Asn122. Positions 126, 174, 183, 259, and 271 each coordinate L-citrulline.

It belongs to the argininosuccinate synthase family. Type 1 subfamily. In terms of assembly, homotetramer.

It is found in the cytoplasm. It catalyses the reaction L-citrulline + L-aspartate + ATP = 2-(N(omega)-L-arginino)succinate + AMP + diphosphate + H(+). It functions in the pathway amino-acid biosynthesis; L-arginine biosynthesis; L-arginine from L-ornithine and carbamoyl phosphate: step 2/3. This is Argininosuccinate synthase from Oenococcus oeni (strain ATCC BAA-331 / PSU-1).